Consider the following 100-residue polypeptide: Tachykinin-4 (100 aa).

An N-terminal signal peptide occupies residues 1-19 (MPSSVTLLLLMGLSVCTSA). 2 consecutive propeptides follow at residues 20 to 55 (EDGG…LQEV) and 85 to 100 (RASS…QGAE). The disordered stretch occupies residues 80–100 (GLLGRRASSTKGSVDEDQGAE).

Belongs to the tachykinin family.

It localises to the secreted. Tachykinins are active peptides which excite neurons, evoke behavioral responses, are potent vasodilators and secretagogues, and contract (directly or indirectly) many smooth muscles. The chain is Tachykinin-4 from Oryctolagus cuniculus (Rabbit).